We begin with the raw amino-acid sequence, 228 residues long: Large ribosomal subunit protein bL25 (228 aa).

The tract at residues 1 to 24 is disordered; that stretch reads MATVMELKATARPKSGKGAARAER.

It belongs to the bacterial ribosomal protein bL25 family. CTC subfamily. In terms of assembly, part of the 50S ribosomal subunit; part of the 5S rRNA/L5/L18/L25 subcomplex. Contacts the 5S rRNA. Binds to the 5S rRNA independently of L5 and L18.

Functionally, this is one of the proteins that binds to the 5S RNA in the ribosome where it forms part of the central protuberance. This is Large ribosomal subunit protein bL25 from Nitrobacter winogradskyi (strain ATCC 25391 / DSM 10237 / CIP 104748 / NCIMB 11846 / Nb-255).